The chain runs to 240 residues: Ribose-5-phosphate isomerase A (240 aa).

The tract at residues 1–23 (MKTSGGSDAAKRRAGESAAETVT) is disordered. Residues 32-35 (TGST), 92-95 (DGAD), and 111-114 (KGGG) each bind substrate. E120 acts as the Proton acceptor in catalysis. K138 contacts substrate.

It belongs to the ribose 5-phosphate isomerase family. Homodimer.

It carries out the reaction aldehydo-D-ribose 5-phosphate = D-ribulose 5-phosphate. Its pathway is carbohydrate degradation; pentose phosphate pathway; D-ribose 5-phosphate from D-ribulose 5-phosphate (non-oxidative stage): step 1/1. Catalyzes the reversible conversion of ribose-5-phosphate to ribulose 5-phosphate. The protein is Ribose-5-phosphate isomerase A of Halorubrum lacusprofundi (strain ATCC 49239 / DSM 5036 / JCM 8891 / ACAM 34).